Here is a 234-residue protein sequence, read N- to C-terminus: Glucosamine-6-phosphate deaminase (234 aa).

Catalysis depends on Asp-63, which acts as the Proton acceptor; for enolization step. Catalysis depends on Asn-129, which acts as the For ring-opening step. His-131 (proton acceptor; for ring-opening step) is an active-site residue. Glu-136 serves as the catalytic For ring-opening step.

This sequence belongs to the glucosamine/galactosamine-6-phosphate isomerase family. NagB subfamily.

The catalysed reaction is alpha-D-glucosamine 6-phosphate + H2O = beta-D-fructose 6-phosphate + NH4(+). It functions in the pathway amino-sugar metabolism; N-acetylneuraminate degradation; D-fructose 6-phosphate from N-acetylneuraminate: step 5/5. In terms of biological role, catalyzes the reversible isomerization-deamination of glucosamine 6-phosphate (GlcN6P) to form fructose 6-phosphate (Fru6P) and ammonium ion. The chain is Glucosamine-6-phosphate deaminase from Listeria monocytogenes serovar 1/2a (strain ATCC BAA-679 / EGD-e).